A 2338-amino-acid polypeptide reads, in one-letter code: Proto-oncogene tyrosine-protein kinase ROS (2338 aa).

The signal sequence occupies residues 1–27 (MKRIRWLTPKPATFVVLGCVWISVAQG). Over 28-1853 (TILSSCLTSC…EDGFWITETS (1826 aa)) the chain is Extracellular. N-linked (GlcNAc...) asparagine glycans are attached at residues N52 and N77. 2 consecutive Fibronectin type-III domains span residues 110 to 205 (LPTA…VPET) and 206 to 294 (APFI…PSPA). Residues N333, N361, N480, N623, N934, and N1010 are each glycosylated (N-linked (GlcNAc...) asparagine). The region spanning 566 to 666 (LPGHPQEVSV…EPSVGTTLVP (101 aa)) is the Fibronectin type-III 3 domain. 2 consecutive Fibronectin type-III domains span residues 942 to 1037 (IPDS…SVPS) and 1038 to 1145 (APEN…TSEI). N1298 is a glycosylation site (N-linked (GlcNAc...) asparagine). 4 consecutive Fibronectin type-III domains span residues 1440 to 1548 (VASN…TKSG), 1549 to 1648 (VPGA…VNMF), 1650 to 1743 (TPEK…TKAG), and 1744 to 1845 (VPSK…LVED). Residue N1675 is glycosylated (N-linked (GlcNAc...) asparagine). The helical transmembrane segment at 1854–1874 (FILTIIVGIFLVATVPLTFVW) threads the bilayer. Residues 1875 to 2338 (HRSLKNHKAT…AHSGHGDVSE (464 aa)) lie on the Cytoplasmic side of the membrane. The 274-residue stretch at 1937-2210 (LSLRLLLGSG…YNIQDQLQLF (274 aa)) folds into the Protein kinase domain. Residues 1943-1951 (LGSGAFGEV) and K1972 contribute to the ATP site. The Proton acceptor role is filled by D2071. Phosphotyrosine; by autocatalysis is present on Y2266. Positions 2277-2314 (EDRYEGPLGSKESGLHDLKKDERQPADKDFCQQPQVAY) are disordered. Basic and acidic residues predominate over residues 2289-2306 (SGLHDLKKDERQPADKDF). The residue at position 2325 (Y2325) is a Phosphotyrosine; by autocatalysis.

Belongs to the protein kinase superfamily. Tyr protein kinase family. Insulin receptor subfamily. Interacts with PTPN11; may activate the PI3 kinase-mTOR signaling pathway. Interacts with VAV3; constitutive interaction mediating VAV3 phosphorylation. Interacts with PTPN6 (via SH2 1 domain); the interaction is direct and promotes ROS1 dephosphorylation. Phosphorylated. Probably autophosphorylates. Phosphorylation at Tyr-2266 is required for the interaction with PTPN6 that mediates ROS1 dephosphorylation. Phosphorylation at Tyr-2266 stimulates the kinase activity and the activation of the ERK1 signaling cascade. Phosphorylation at Tyr-2266 and/or Tyr-2325 recruits PTPN11. Expressed in heart, lung, kidney and testis.

Its subcellular location is the cell membrane. It catalyses the reaction L-tyrosyl-[protein] + ATP = O-phospho-L-tyrosyl-[protein] + ADP + H(+). Inhibited by dephosphorylation by PTPN6. Functionally, orphan receptor tyrosine kinase (RTK) that plays a role in epithelial cell differentiation and regionalization of the proximal epididymal epithelium. NELL2 is an endogenous ligand for ROS1. Upon endogenous stimulation by NELL2, ROS1 activates the intracellular signaling pathway and triggers epididymal epithelial differentiation and subsequent sperm maturation. May activate several downstream signaling pathways related to cell differentiation, proliferation, growth and survival including the PI3 kinase-mTOR signaling pathway. Mediates the phosphorylation of PTPN11, an activator of this pathway. May also phosphorylate and activate the transcription factor STAT3 to control anchorage-independent cell growth. Mediates the phosphorylation and the activation of VAV3, a guanine nucleotide exchange factor regulating cell morphology. May activate other downstream signaling proteins including AKT1, MAPK1, MAPK3, IRS1 and PLCG2. This chain is Proto-oncogene tyrosine-protein kinase ROS (Ros1), found in Rattus norvegicus (Rat).